A 345-amino-acid polypeptide reads, in one-letter code: uncharacterized protein (345 aa).

The protein resides in the cell membrane. Involved in potassium and divalent cation transport. Enhances the transport activity of the cation/potassium transporter CzcD. This is an uncharacterized protein from Bacillus subtilis (strain 168).